Reading from the N-terminus, the 192-residue chain is GTP-binding protein RHO2 (192 aa).

14 to 21 contacts GTP; sequence GDGACGKT. The Effector region motif lies at 36–44; it reads YHPTVFENY. GTP contacts are provided by residues 61 to 65 and 119 to 122; these read DTAGQ and LKKD. Residue C188 is the site of S-palmitoyl cysteine attachment. At C189 the chain carries Cysteine methyl ester. Residue C189 is the site of S-geranylgeranyl cysteine attachment. The propeptide at 190 to 192 is removed in mature form; the sequence is IIL.

Belongs to the small GTPase superfamily. Rho family. In terms of assembly, interacts with BEM4.

The protein localises to the cell membrane. The enzyme catalyses GTP + H2O = GDP + phosphate + H(+). This chain is GTP-binding protein RHO2 (RHO2), found in Saccharomyces cerevisiae (strain ATCC 204508 / S288c) (Baker's yeast).